A 316-amino-acid polypeptide reads, in one-letter code: Low affinity immunoglobulin gamma Fc region receptor II-a (316 aa).

The first 35 residues, Met1 to Ala35, serve as a signal peptide directing secretion. The Extracellular portion of the chain corresponds to Ala36 to Gly216. Ig-like C2-type domains lie at Pro38–Thr117 and Glu121–Thr203. 2 disulfide bridges follow: Cys61–Cys103 and Cys142–Cys186. N-linked (GlcNAc...) asparagine glycosylation is found at Asn96, Asn170, and Asn177. Residues Ile217–Tyr239 form a helical membrane-spanning segment. The Cytoplasmic segment spans residues Cys240–Asn316. 2 positions are modified to phosphotyrosine; by SRC-type Tyr-kinases: Tyr287 and Tyr303.

Interacts with INPP5D/SHIP1 and INPPL1/SHIP2, regulating its function. Interacts with APCS and FGR. Interacts with HCK. Phosphorylated by SRC-type Tyr-kinases such as HCK, LYN, BLK, FYN and SYK.

Its subcellular location is the cell membrane. Binds to the Fc region of immunoglobulins gamma. Low affinity receptor. By binding to IgG it initiates cellular responses against pathogens and soluble antigens. Promotes phagocytosis of opsonized antigens. The protein is Low affinity immunoglobulin gamma Fc region receptor II-a (FCGR2A) of Pan troglodytes (Chimpanzee).